The primary structure comprises 430 residues: Ribosomal protein uS12 methylthiotransferase RimO (430 aa).

The MTTase N-terminal domain occupies 2-119 (ISVYSISLGC…WPEMIGRALG (118 aa)). The [4Fe-4S] cluster site is built by cysteine 11, cysteine 46, cysteine 81, cysteine 145, cysteine 149, and cysteine 152. A Radical SAM core domain is found at 131–361 (STGPSYAYLK…MEVQAEISEE (231 aa)). Positions 364 to 430 (EGFTGSDEDV…SRTYDLVALS (67 aa)) constitute a TRAM domain.

It belongs to the methylthiotransferase family. RimO subfamily. It depends on [4Fe-4S] cluster as a cofactor.

The protein resides in the cytoplasm. It catalyses the reaction L-aspartate(89)-[ribosomal protein uS12]-hydrogen + (sulfur carrier)-SH + AH2 + 2 S-adenosyl-L-methionine = 3-methylsulfanyl-L-aspartate(89)-[ribosomal protein uS12]-hydrogen + (sulfur carrier)-H + 5'-deoxyadenosine + L-methionine + A + S-adenosyl-L-homocysteine + 2 H(+). Functionally, catalyzes the methylthiolation of an aspartic acid residue of ribosomal protein uS12. The protein is Ribosomal protein uS12 methylthiotransferase RimO of Oleidesulfovibrio alaskensis (strain ATCC BAA-1058 / DSM 17464 / G20) (Desulfovibrio alaskensis).